The sequence spans 804 residues: Chondroitin sulfate synthase mig-22 (804 aa).

The Cytoplasmic segment spans residues 1–6 (MVGGGR). The helical; Signal-anchor for type II membrane protein transmembrane segment at 7-27 (TGIHLLLGFLIGAALALFFFS) threads the bilayer. The Lumenal portion of the chain corresponds to 28 to 804 (STPSIDLTSS…QLAKLLFHEK (777 aa)). Asparagine 123, asparagine 172, and asparagine 268 each carry an N-linked (GlcNAc...) asparagine glycan.

The protein belongs to the chondroitin N-acetylgalactosaminyltransferase family. Interacts with sqv-5. It depends on a divalent metal cation as a cofactor. Expressed in seam cells, the vulval epithelium and in oocytes (at protein level).

The protein resides in the golgi apparatus. It localises to the golgi stack membrane. The catalysed reaction is 3-O-(beta-D-GlcA-(1-&gt;3)-beta-D-GalNAc-(1-&gt;4)-beta-D-GlcA-(1-&gt;3)-beta-D-Gal-(1-&gt;3)-beta-D-Gal-(1-&gt;4)-beta-D-Xyl)-L-seryl-[protein] + UDP-N-acetyl-alpha-D-galactosamine = 3-O-(beta-D-GalNAc-(1-&gt;4)-beta-D-GlcA-(1-&gt;3)-beta-D-GalNAc-(1-&gt;4)-beta-D-GlcA-(1-&gt;3)-beta-D-Gal-(1-&gt;3)-beta-D-Gal-(1-&gt;4)-beta-D-Xyl)-L-seryl-[protein] + UDP + H(+). It carries out the reaction 3-O-{beta-D-GlcA-(1-&gt;3)-[beta-D-GalNAc-(1-&gt;4)-beta-D-GlcA-(1-&gt;3)](n)-beta-D-GalNAc-(1-&gt;4)-beta-D-GlcA-(1-&gt;3)-beta-D-Gal-(1-&gt;3)-beta-D-Gal-(1-&gt;4)-beta-D-Xyl}-L-seryl-[protein] + UDP-N-acetyl-alpha-D-galactosamine = 3-O-{[beta-D-GalNAc-(1-&gt;4)-beta-D-GlcA-(1-&gt;3)](n+1)-beta-D-GalNAc-(1-&gt;4)-beta-D-GlcA-(1-&gt;3)-beta-D-Gal-(1-&gt;3)-beta-D-Gal-(1-&gt;4)-beta-D-Xyl}-L-seryl-[protein] + UDP + H(+). It catalyses the reaction 3-O-(beta-D-GalNAc-(1-&gt;4)-beta-D-GlcA-(1-&gt;3)-beta-D-Gal-(1-&gt;3)-beta-D-Gal-(1-&gt;4)-beta-D-Xyl)-L-seryl-[protein] + UDP-alpha-D-glucuronate = 3-O-(beta-D-GlcA-(1-&gt;3)-beta-D-GalNAc-(1-&gt;4)-beta-D-GlcA-(1-&gt;3)-beta-D-Gal-(1-&gt;3)-beta-D-Gal-(1-&gt;4)-beta-D-Xyl)-L-seryl-[protein] + UDP + H(+). The enzyme catalyses 3-O-{[beta-D-GalNAc-(1-&gt;4)-beta-D-GlcA-(1-&gt;3)](n)-beta-D-GalNAc-(1-&gt;4)-beta-D-GlcA-(1-&gt;3)-beta-D-Gal-(1-&gt;3)-beta-D-Gal-(1-&gt;4)-beta-D-Xyl}-L-seryl-[protein] + UDP-alpha-D-glucuronate = 3-O-{beta-D-GlcA-(1-&gt;3)-[beta-D-GalNAc-(1-&gt;4)-beta-D-GlcA-(1-&gt;3)](n)-beta-D-GalNAc-(1-&gt;4)-beta-D-GlcA-(1-&gt;3)-beta-D-Gal-(1-&gt;3)-beta-D-Gal-(1-&gt;4)-beta-D-Xyl}-L-seryl-[protein] + UDP + H(+). Its function is as follows. Has both beta-1,3-glucuronic acid and beta-1,4-N-acetylgalactosamine transferase activity. Transfers glucuronic acid (GlcUA) from UDP-GlcUA and N-acetylgalactosamine (GalNAc) from UDP-GalNAc to the non-reducing end of the elongating chondroitin polymer. Required together with sqv-5 for the biosynthesis of chondroitin. Chondroitin is involved in organogenesis of the vulva, maturation of the gonad, and neural development. May have a specific role in unc-6/netrin-mediated dorsal guidance of gonadal distal tip cells. Glycosyltransferase activity is weak. The protein is Chondroitin sulfate synthase mig-22 (mig-22) of Caenorhabditis elegans.